A 77-amino-acid polypeptide reads, in one-letter code: Translation initiation factor IF-1, chloroplastic (77 aa).

Positions M1–R71 constitute an S1-like domain.

The protein belongs to the IF-1 family. Component of the 30S ribosomal translation pre-initiation complex which assembles on the 30S ribosome in the order IF-2 and IF-3, IF-1 and N-formylmethionyl-tRNA(fMet); mRNA recruitment can occur at any time during PIC assembly.

The protein localises to the plastid. It is found in the chloroplast. Functionally, one of the essential components for the initiation of protein synthesis. Stabilizes the binding of IF-2 and IF-3 on the 30S subunit to which N-formylmethionyl-tRNA(fMet) subsequently binds. Helps modulate mRNA selection, yielding the 30S pre-initiation complex (PIC). Upon addition of the 50S ribosomal subunit IF-1, IF-2 and IF-3 are released leaving the mature 70S translation initiation complex. The protein is Translation initiation factor IF-1, chloroplastic of Brexia madagascariensis.